The primary structure comprises 957 residues: Glycine dehydrogenase (decarboxylating) (957 aa).

Lys708 carries the N6-(pyridoxal phosphate)lysine modification.

The protein belongs to the GcvP family. As to quaternary structure, the glycine cleavage system is composed of four proteins: P, T, L and H. The cofactor is pyridoxal 5'-phosphate.

It catalyses the reaction N(6)-[(R)-lipoyl]-L-lysyl-[glycine-cleavage complex H protein] + glycine + H(+) = N(6)-[(R)-S(8)-aminomethyldihydrolipoyl]-L-lysyl-[glycine-cleavage complex H protein] + CO2. The glycine cleavage system catalyzes the degradation of glycine. The P protein binds the alpha-amino group of glycine through its pyridoxal phosphate cofactor; CO(2) is released and the remaining methylamine moiety is then transferred to the lipoamide cofactor of the H protein. The chain is Glycine dehydrogenase (decarboxylating) from Salmonella agona (strain SL483).